Here is a 337-residue protein sequence, read N- to C-terminus: Alanine racemase (337 aa).

Residue lysine 33 is the Proton acceptor; specific for D-alanine of the active site. At lysine 33 the chain carries N6-(pyridoxal phosphate)lysine. Arginine 118 is a binding site for substrate. The active-site Proton acceptor; specific for L-alanine is tyrosine 246. Substrate is bound at residue methionine 292.

The protein belongs to the alanine racemase family. Requires pyridoxal 5'-phosphate as cofactor.

The catalysed reaction is L-alanine = D-alanine. It functions in the pathway amino-acid biosynthesis; D-alanine biosynthesis; D-alanine from L-alanine: step 1/1. Its function is as follows. Catalyzes the interconversion of L-alanine and D-alanine. May also act on other amino acids. In Campylobacter concisus (strain 13826), this protein is Alanine racemase (alr).